We begin with the raw amino-acid sequence, 391 residues long: Chorismate synthase (391 aa).

Arg48 is a binding site for NADP(+). Residues 126 to 128 (RAS), Gly286, 301 to 305 (KPTSS), and Arg328 each bind FMN.

The protein belongs to the chorismate synthase family. The cofactor is FMNH2.

It carries out the reaction 5-O-(1-carboxyvinyl)-3-phosphoshikimate = chorismate + phosphate. The protein operates within metabolic intermediate biosynthesis; chorismate biosynthesis; chorismate from D-erythrose 4-phosphate and phosphoenolpyruvate: step 7/7. Functionally, catalyzes the anti-1,4-elimination of the C-3 phosphate and the C-6 proR hydrogen from 5-enolpyruvylshikimate-3-phosphate (EPSP) to yield chorismate, which is the branch point compound that serves as the starting substrate for the three terminal pathways of aromatic amino acid biosynthesis. This reaction introduces a second double bond into the aromatic ring system. This chain is Chorismate synthase, found in Saccharolobus islandicus (strain Y.N.15.51 / Yellowstone #2) (Sulfolobus islandicus).